Consider the following 353-residue polypeptide: Photosystem II protein D1 (353 aa).

Position 2 is an N-acetylthreonine (Thr-2). Residue Thr-2 is modified to Phosphothreonine. Helical transmembrane passes span 29-46, 118-133, and 142-156; these read YIGW…TATS, HFLL…EWEL, and WIAV…AAAA. A chlorophyll a-binding site is contributed by His-118. Tyr-126 provides a ligand contact to pheophytin a. Residues Asp-170 and Glu-189 each coordinate [CaMn4O5] cluster. A helical transmembrane segment spans residues 197-218; sequence FHMLGVAGVFGGSLFSAMHGSL. His-198 is a binding site for chlorophyll a. Residues His-215 and 264–265 contribute to the a quinone site; that span reads SF. Fe cation is bound at residue His-215. His-272 is a Fe cation binding site. The helical transmembrane segment at 274–288 threads the bilayer; the sequence is FLAAWPVVGIWFTAL. His-332, Glu-333, Asp-342, and Ala-344 together coordinate [CaMn4O5] cluster. Positions 345 to 353 are excised as a propeptide; sequence SVEAPSVKA.

The protein belongs to the reaction center PufL/M/PsbA/D family. In terms of assembly, PSII is composed of 1 copy each of membrane proteins PsbA, PsbB, PsbC, PsbD, PsbE, PsbF, PsbH, PsbI, PsbJ, PsbK, PsbL, PsbM, PsbT, PsbX, PsbY, PsbZ, Psb30/Ycf12, at least 3 peripheral proteins of the oxygen-evolving complex and a large number of cofactors. It forms dimeric complexes. The D1/D2 heterodimer binds P680, chlorophylls that are the primary electron donor of PSII, and subsequent electron acceptors. It shares a non-heme iron and each subunit binds pheophytin, quinone, additional chlorophylls, carotenoids and lipids. D1 provides most of the ligands for the Mn4-Ca-O5 cluster of the oxygen-evolving complex (OEC). There is also a Cl(-1) ion associated with D1 and D2, which is required for oxygen evolution. The PSII complex binds additional chlorophylls, carotenoids and specific lipids. is required as a cofactor. Tyr-161 forms a radical intermediate that is referred to as redox-active TyrZ, YZ or Y-Z. In terms of processing, C-terminally processed by CTPA; processing is essential to allow assembly of the oxygen-evolving complex and thus photosynthetic growth.

The protein resides in the plastid. It is found in the chloroplast thylakoid membrane. The enzyme catalyses 2 a plastoquinone + 4 hnu + 2 H2O = 2 a plastoquinol + O2. Its function is as follows. Photosystem II (PSII) is a light-driven water:plastoquinone oxidoreductase that uses light energy to abstract electrons from H(2)O, generating O(2) and a proton gradient subsequently used for ATP formation. It consists of a core antenna complex that captures photons, and an electron transfer chain that converts photonic excitation into a charge separation. The D1/D2 (PsbA/PsbD) reaction center heterodimer binds P680, the primary electron donor of PSII as well as several subsequent electron acceptors. This Angiopteris evecta (Mule's foot fern) protein is Photosystem II protein D1.